The sequence spans 274 residues: N-acetylmuramic acid 6-phosphate etherase (274 aa).

The 164-residue stretch at 52–215 folds into the SIS domain; sequence IVPRMEQGGR…STSIMIRLGR (164 aa). The active-site Proton donor is the Glu80. Residue Glu111 is part of the active site.

This sequence belongs to the GCKR-like family. MurNAc-6-P etherase subfamily. As to quaternary structure, homodimer.

It catalyses the reaction N-acetyl-D-muramate 6-phosphate + H2O = N-acetyl-D-glucosamine 6-phosphate + (R)-lactate. It participates in amino-sugar metabolism; N-acetylmuramate degradation. Functionally, specifically catalyzes the cleavage of the D-lactyl ether substituent of MurNAc 6-phosphate, producing GlcNAc 6-phosphate and D-lactate. This Porphyromonas gingivalis (strain ATCC 33277 / DSM 20709 / CIP 103683 / JCM 12257 / NCTC 11834 / 2561) protein is N-acetylmuramic acid 6-phosphate etherase.